Here is a 439-residue protein sequence, read N- to C-terminus: MVASARGLRTLHSAHSSISALPASTVPRLQLAVSRCYATTTSPDCPITNSSNSSNSTPTLTPKQRITAFKDKLNAGPSFSDFVSGGGASNDSVPLDPTEAYSLKTALVGPPGKKKQIIRLPSWLKTPIPDSPNFRRIKSDLRGLNLHTVCEEARCPNISDCWGGSSKSAATATIMLMGDTCTRGCRFCSVKTSRTPPPLDPHEPENTAEALSRWGLGYVVMTSVDRDDLADGGARHVAETVRKVKQKAPNILLECLTGDYAGDLEMVALVATSGLDVFAHNVETVEALTPFVRDRRATFQQSLRVLKAAKEAKPELITKTSIMLGLGETEAQLWETLKALRAVDVDVVTFGQYMRPTKRHMAVHEYVRPDVFDSWKERALEMGFLYCASGPLVRSSYKAGEAFIENVLKKRRGEGADGSGGSSTRREDVERLVAGGVVR.

Residues 1 to 37 constitute a mitochondrion transit peptide; sequence MVASARGLRTLHSAHSSISALPASTVPRLQLAVSRCY. [4Fe-4S] cluster contacts are provided by cysteine 150, cysteine 155, cysteine 161, cysteine 181, cysteine 185, cysteine 188, and serine 396. A Radical SAM core domain is found at 164 to 385; the sequence is GSSKSAATAT…KERALEMGFL (222 aa).

Belongs to the radical SAM superfamily. Lipoyl synthase family. [4Fe-4S] cluster serves as cofactor.

It is found in the mitochondrion. The catalysed reaction is [[Fe-S] cluster scaffold protein carrying a second [4Fe-4S](2+) cluster] + N(6)-octanoyl-L-lysyl-[protein] + 2 oxidized [2Fe-2S]-[ferredoxin] + 2 S-adenosyl-L-methionine + 4 H(+) = [[Fe-S] cluster scaffold protein] + N(6)-[(R)-dihydrolipoyl]-L-lysyl-[protein] + 4 Fe(3+) + 2 hydrogen sulfide + 2 5'-deoxyadenosine + 2 L-methionine + 2 reduced [2Fe-2S]-[ferredoxin]. The protein operates within protein modification; protein lipoylation via endogenous pathway; protein N(6)-(lipoyl)lysine from octanoyl-[acyl-carrier-protein]: step 2/2. Functionally, catalyzes the radical-mediated insertion of two sulfur atoms into the C-6 and C-8 positions of the octanoyl moiety bound to the lipoyl domains of lipoate-dependent enzymes, thereby converting the octanoylated domains into lipoylated derivatives. This is Lipoyl synthase, mitochondrial from Paracoccidioides lutzii (strain ATCC MYA-826 / Pb01) (Paracoccidioides brasiliensis).